The primary structure comprises 212 residues: Thymidylate kinase (212 aa).

11–18 (GIEGSGKT) provides a ligand contact to ATP.

Belongs to the thymidylate kinase family.

The enzyme catalyses dTMP + ATP = dTDP + ADP. Phosphorylation of dTMP to form dTDP in both de novo and salvage pathways of dTTP synthesis. The protein is Thymidylate kinase of Buchnera aphidicola subsp. Baizongia pistaciae (strain Bp).